The chain runs to 322 residues: Tetraacyldisaccharide 4'-kinase (322 aa).

40-47 (CVGGTGKT) serves as a coordination point for ATP.

Belongs to the LpxK family.

The catalysed reaction is a lipid A disaccharide + ATP = a lipid IVA + ADP + H(+). Its pathway is glycolipid biosynthesis; lipid IV(A) biosynthesis; lipid IV(A) from (3R)-3-hydroxytetradecanoyl-[acyl-carrier-protein] and UDP-N-acetyl-alpha-D-glucosamine: step 6/6. Transfers the gamma-phosphate of ATP to the 4'-position of a tetraacyldisaccharide 1-phosphate intermediate (termed DS-1-P) to form tetraacyldisaccharide 1,4'-bis-phosphate (lipid IVA). The polypeptide is Tetraacyldisaccharide 4'-kinase (Koribacter versatilis (strain Ellin345)).